The primary structure comprises 295 residues: Non-selective voltage-gated ion channel VDAC2 (295 aa).

Residues K24 and K32 each coordinate ATP. An N6-acetyllysine; alternate modification is found at K32. K32 carries the N6-succinyllysine; alternate modification. K32 participates in a covalent cross-link: Glycyl lysine isopeptide (Lys-Gly) (interchain with G-Cter in ubiquitin); alternate. 2 consecutive transmembrane segments (beta stranded) span residues 38-45 and 51-60; these read LVKLDVKT and VEFSTSGSSN. Residue K65 forms a Glycyl lysine isopeptide (Lys-Gly) (interchain with G-Cter in ubiquitin) linkage. Residues 66–76 traverse the membrane as a beta stranded segment; the sequence is VSGTLETKYKW. Y79 is modified (phosphotyrosine). The next 3 membrane-spanning stretches (beta stranded) occupy residues 81-88, 92-100, and 107-116; these read LTFTEKWN, TLGTEIAIE, and LKLTFDTTFS. T119 carries the phosphothreonine modification. K121 is subject to N6-acetyllysine; alternate. K121 participates in a covalent cross-link: Glycyl lysine isopeptide (Lys-Gly) (interchain with G-Cter in ubiquitin); alternate. A Glycyl lysine isopeptide (Lys-Gly) (interchain with G-Cter in ubiquitin) cross-link involves residue K122. The next 4 membrane-spanning stretches (beta stranded) occupy residues 122–131, 135–144, 148–157, and 161–170; these read KSGKIKSAYK, INLGCDVDFD, PAIHGSAVFG, and WLAGYQMTFD. K173 is covalently cross-linked (Glycyl lysine isopeptide (Lys-Gly) (interchain with G-Cter in ubiquitin)). Beta stranded transmembrane passes span 177-187, 190-197, 201-210, 214-222, 229-238, and 243-250; these read TRSNFAVGYRT, FQLHTNVN, EFGGSIYQKV, FDTSVNLAW, TRFGIAAKYQ, and ASISAKVN. S252 is subject to Phosphoserine. NAD(+)-binding positions include 254 to 256 and 272 to 276; these read LIG and SALVD. 2 beta stranded membrane passes run 254–263 and 267–275; these read LIGVGYTQTL and VKLTLSALV. Residue K278 is modified to N6-acetyllysine; alternate. K278 is covalently cross-linked (Glycyl lysine isopeptide (Lys-Gly) (interchain with G-Cter in ubiquitin); alternate). A beta stranded transmembrane segment spans residues 285–295; that stretch reads HKLGLALELEA.

It belongs to the eukaryotic mitochondrial porin family. In terms of assembly, monomer, homodimer and higher order oligomers; formation of higher order structures is necessary for scramblase activity. Interacts with ARMC12 in a TBC1D21-dependent manner. Interacts with KLC3. Interacts with SPATA33. Interacts with PPP3CC in a SPATA33-dependent manner. In terms of processing, ubiquitinated by PRKN during mitophagy, leading to its degradation and enhancement of mitophagy. Deubiquitinated by USP30. Highest levels of expression detected in testis, less but still abundant expression in heart, kidney, brain, and skeletal muscle. Expressed in the sperm midpiece (at protein level).

It localises to the mitochondrion outer membrane. The protein localises to the membrane. The catalysed reaction is chloride(in) = chloride(out). It catalyses the reaction K(+)(in) = K(+)(out). The enzyme catalyses a 1,2-diacyl-sn-glycero-3-phospho-L-serine(in) = a 1,2-diacyl-sn-glycero-3-phospho-L-serine(out). It carries out the reaction a 1,2-diacyl-sn-glycero-3-phosphocholine(in) = a 1,2-diacyl-sn-glycero-3-phosphocholine(out). The catalysed reaction is a 1,2-diacyl-sn-glycero-3-phospho-(1D-myo-inositol)(in) = a 1,2-diacyl-sn-glycero-3-phospho-(1D-myo-inositol)(out). Non-selective voltage-gated ion channel that mediates the transport of anions and cations through the mitochondrion outer membrane and plasma membrane. The channel adopts an open conformation at zero mV and a closed conformation at both positive and negative potentials. There are two populations of channels; the main that functions in a lower open-state conductance with lower ion selectivity, that switch, in a voltage-dependent manner, from the open to a low-conducting 'closed' state and the other that has a normal ion selectivity in the typical high conductance, 'open' state. Binds various lipids, including the sphingolipid ceramide, the phospholipid phosphatidylcholine, and the sterols cholesterol and oxysterol. Binding of ceramide promotes the mitochondrial outer membrane permeabilization (MOMP) apoptotic pathway. Functionally, catalyzes the scrambling of phospholipids across the outer mitochondrial membrane; the mechanism is unrelated to channel activity and is capable of translocating both anionic and zwitterionic phospholipids. This Mus musculus (Mouse) protein is Non-selective voltage-gated ion channel VDAC2.